An 834-amino-acid chain; its full sequence is DNA gyrase subunit A (834 aa).

Positions 34-500 (LPDIRDGLKP…ADDIRDIEDI (467 aa)) constitute a Topo IIA-type catalytic domain. Tyrosine 122 functions as the O-(5'-phospho-DNA)-tyrosine intermediate in the catalytic mechanism. Residues 527–533 (QRRGGHG) carry the GyrA-box motif. The segment at 810 to 834 (LSSNENDDEVLSGSEEECSDTVSLR) is disordered. Acidic residues predominate over residues 814-828 (ENDDEVLSGSEEECS).

This sequence belongs to the type II topoisomerase GyrA/ParC subunit family. Heterotetramer, composed of two GyrA and two GyrB chains. In the heterotetramer, GyrA contains the active site tyrosine that forms a transient covalent intermediate with DNA, while GyrB binds cofactors and catalyzes ATP hydrolysis.

Its subcellular location is the cytoplasm. The catalysed reaction is ATP-dependent breakage, passage and rejoining of double-stranded DNA.. Its function is as follows. A type II topoisomerase that negatively supercoils closed circular double-stranded (ds) DNA in an ATP-dependent manner to modulate DNA topology and maintain chromosomes in an underwound state. Negative supercoiling favors strand separation, and DNA replication, transcription, recombination and repair, all of which involve strand separation. Also able to catalyze the interconversion of other topological isomers of dsDNA rings, including catenanes and knotted rings. Type II topoisomerases break and join 2 DNA strands simultaneously in an ATP-dependent manner. This chain is DNA gyrase subunit A, found in Chlamydia pneumoniae (Chlamydophila pneumoniae).